Consider the following 180-residue polypeptide: MIIYLHGFDSTSPGNHEKVLQLQFIDEDVRLISYSTLHPRHDMQHLLKQVDKMIQHSDDDRPLICGVGLGGFWAERVGFLCDIRQVIVNPNLFPQENMGGKIDRPEEYVDIATKCVANFREKNRDRCMVMLSRHDEMLDSQRSAQMLGAYYEIVWDDIQTHKFKSISPHLQRIKAFKTLG.

The protein belongs to the UPF0227 family.

The protein is UPF0227 protein PC1_2487 of Pectobacterium carotovorum subsp. carotovorum (strain PC1).